The primary structure comprises 1064 residues: MPPAMADNLDIWAVDSQIASDGAISVDFLLPTGIYIQLEVPREATISYIKQMLWKQVHNYPMFNLLMDIDSYMFACVNQTAVYEELEDETRRLCDVRPFLPVLKLVTRSCDPAEKLDSKIGVLIGKGLHEFDALKDPEVNEFRRKMRKFSEAKIQSLVGLSWIDWLKHTYPPEHEPSVLENLEDKLYGGKLVVAVHFENSQDVFSFQVSPNLNPIKINELAIQKRLTIRGKEDEASPCDYVLQVSGRVEYVFGDHPLIQFQYIRNCVMNRTLPHFILVECCKIKKMYEQEMIAIEAAINRNSSNLPLPLPPKKTRVISHIWDNNNPFQITLVKGNKLNTEETVKVHVRAGLFHGTELLCKTVVSSEISGKNDHIWNEQLEFDINICDLPRMARLCFAVYAVLDKVKTKKSTKTINPSKYQTIRKAGKVHYPVAWVNTMVFDFKGQLRSGDVILHSWSSFPDELEEMLNPMGTVQTNPYAENATALHITFPENKKQPCYYPPFDKIIEKAAELASGDSANVSSRGGKKFLAVLKEILDRDPLSQLCENEMDLIWTLRQDCRENFPQSLPKLLLSIKWNKLEDVAQLQALLQIWPKLPPREALELLDFNYPDQYVREYAVGCLRQMSDEELSQYLLQLVQVLKYEPFLDCALSRFLLERALDNRRIGQFLFWHLRSEVHTPAVSVQFGVILEAYCRGSVGHMKVLSKQVEALNKLKTLNSLIKLNAVKLSRAKGKEAMHTCLKQSAYREALSDLQSPLNPCVILSELYVEKCKYMDSKMKPLWLVYSSRAFGEDSVGVIFKNGDDLRQDMLTLQMLRLMDLLWKEAGLDLRMLPYGCLATGDRSGLIEVVSTSETIADIQLNSSNVAATAAFNKDALLNWLKEYNSGDDLDRAIEEFTLSCAGYCVASYVLGIGDRHSDNIMVKKTGQLFHIDFGHILGNFKSKFGIKRERVPFILTYDFIHVIQQGKTGNTEKFGRFRQCCEDAYLILRRHGNLFITLFALMLTAGLPELTSVKDIQYLKDSLALGKSEEEALKQFKQKFDEALRESWTTKVNWMAHTVRKDYRS.

The PI3K-ABD domain maps to 20–109 (SDGAISVDFL…LPVLKLVTRS (90 aa)). The PI3K-RBD domain maps to 188–279 (GGKLVVAVHF…RTLPHFILVE (92 aa)). Position 318 is a phosphoserine (Ser-318). The C2 PI3K-type domain occupies 323 to 490 (NNNPFQITLV…NATALHITFP (168 aa)). Residues 404–412 (KVKTKKSTK) carry the Nuclear localization signal (NLS) motif. Residues 518–695 (ANVSSRGGKK…GVILEAYCRG (178 aa)) enclose the PIK helical domain. The PI3K/PI4K catalytic domain occupies 766 to 1047 (YVEKCKYMDS…KFDEALRESW (282 aa)). A G-loop region spans residues 772-778 (YMDSKMK). The segment at 910 to 918 (GIGDRHSDN) is catalytic loop. Positions 929–955 (HIDFGHILGNFKSKFGIKRERVPFILT) are activation loop. A Phosphoserine; by autocatalysis modification is found at Ser-1064.

It belongs to the PI3/PI4-kinase family. Heterodimer of a catalytic subunit PIK3CB and a p85 regulatory subunit (PIK3R1, PIK3R2 or PIK3R3). Interaction with PIK3R2 is required for nuclear localization and nuclear export. Part of a complex with PIK3R1 and PTEN. Binding to PTEN may antagonize the lipid kinase activity under normal growth conditions. Part of a complex involved in autophagosome formation composed of PIK3C3 and PIK3R4. Interacts with BECN1, ATG14 and RAB5A. Post-translationally, phosphorylation at Ser-1064 down-regulates lipid kinase activity. Autophosphorylation at Ser-1064 negatively regulates the phosphatidylinositol-4,5-bisphosphate 3-kinase activity.

It localises to the cytoplasm. Its subcellular location is the nucleus. The enzyme catalyses a 1,2-diacyl-sn-glycero-3-phospho-(1D-myo-inositol-4,5-bisphosphate) + ATP = a 1,2-diacyl-sn-glycero-3-phospho-(1D-myo-inositol-3,4,5-trisphosphate) + ADP + H(+). It catalyses the reaction 1-octadecanoyl-2-(5Z,8Z,11Z,14Z)-eicosatetraenoyl-sn-glycero-3-phospho-1D-myo-inositol 4,5-bisphosphate + ATP = 1-octadecanoyl-2-(5Z,8Z,11Z,14Z-eicosatetraenoyl)-sn-glycero-3-phospho-(1D-myo-inositol 3,4,5-triphosphate) + ADP + H(+). It carries out the reaction L-seryl-[protein] + ATP = O-phospho-L-seryl-[protein] + ADP + H(+). Its pathway is phospholipid metabolism; phosphatidylinositol phosphate biosynthesis. Functionally, phosphoinositide-3-kinase (PI3K) phosphorylates phosphatidylinositol (PI) derivatives at position 3 of the inositol ring to produce 3-phosphoinositides. Uses ATP and PtdIns(4,5)P2 (phosphatidylinositol 4,5-bisphosphate) to generate phosphatidylinositol 3,4,5-trisphosphate (PIP3). PIP3 plays a key role by recruiting PH domain-containing proteins to the membrane, including AKT1 and PDPK1, activating signaling cascades involved in cell growth, survival, proliferation, motility and morphology. Involved in the activation of AKT1 upon stimulation by G-protein coupled receptors (GPCRs) ligands such as CXCL12, sphingosine 1-phosphate, and lysophosphatidic acid. May also act downstream receptor tyrosine kinases. Required in different signaling pathways for stable platelet adhesion and aggregation. Plays a role in platelet activation signaling triggered by GPCRs, alpha-IIb/beta-3 integrins (ITGA2B/ ITGB3) and ITAM (immunoreceptor tyrosine-based activation motif)-bearing receptors such as GP6. Regulates the strength of adhesion of ITGA2B/ ITGB3 activated receptors necessary for the cellular transmission of contractile forces. Required for platelet aggregation induced by F2 (thrombin) and thromboxane A2 (TXA2). Has a role in cell survival. May have a role in cell migration. Involved in the early stage of autophagosome formation. Modulates the intracellular level of PtdIns3P (phosphatidylinositol 3-phosphate) and activates PIK3C3 kinase activity. May act as a scaffold, independently of its lipid kinase activity to positively regulate autophagy. May have a role in insulin signaling as scaffolding protein in which the lipid kinase activity is not required. May have a kinase-independent function in regulating cell proliferation and in clathrin-mediated endocytosis. Mediator of oncogenic signal in cell lines lacking PTEN. The lipid kinase activity is necessary for its role in oncogenic transformation. Required for the growth of ERBB2 and RAS driven tumors. Also has a protein kinase activity showing autophosphorylation. The chain is Phosphatidylinositol 4,5-bisphosphate 3-kinase catalytic subunit beta isoform (Pik3cb) from Mus musculus (Mouse).